The sequence spans 89 residues: Small ribosomal subunit protein uS15 (89 aa).

The interval 1–25 is disordered; that stretch reads MSLDTTEKQQLINTHQTHGTDTGSA. Residues 8-25 show a composition bias toward polar residues; sequence KQQLINTHQTHGTDTGSA.

Belongs to the universal ribosomal protein uS15 family. In terms of assembly, part of the 30S ribosomal subunit. Forms a bridge to the 50S subunit in the 70S ribosome, contacting the 23S rRNA.

One of the primary rRNA binding proteins, it binds directly to 16S rRNA where it helps nucleate assembly of the platform of the 30S subunit by binding and bridging several RNA helices of the 16S rRNA. Functionally, forms an intersubunit bridge (bridge B4) with the 23S rRNA of the 50S subunit in the ribosome. This Synechococcus sp. (strain CC9902) protein is Small ribosomal subunit protein uS15.